A 277-amino-acid chain; its full sequence is Antigen 1 (277 aa).

A signal peptide spans 1 to 16 (MQLLALTLALCASIAA). N-linked (GlcNAc...) asparagine glycans are attached at residues asparagine 41, asparagine 71, asparagine 127, and asparagine 200. The tract at residues 230 to 277 (CVGGEEENDGQGEEQTEEPAQDDQQDEAAEEEIPENCHTHEGGELHCT) is disordered. Acidic residues predominate over residues 233–263 (GEEENDGQGEEQTEEPAQDDQQDEAAEEEIP). Residues 264–277 (ENCHTHEGGELHCT) show a composition bias toward basic and acidic residues.

The protein belongs to the ZPS1 family.

The sequence is that of Antigen 1 (aspnd1) from Emericella nidulans (strain FGSC A4 / ATCC 38163 / CBS 112.46 / NRRL 194 / M139) (Aspergillus nidulans).